Here is a 511-residue protein sequence, read N- to C-terminus: Lysine--tRNA ligase (511 aa).

Glutamate 421 and glutamate 428 together coordinate Mg(2+).

It belongs to the class-II aminoacyl-tRNA synthetase family. In terms of assembly, homodimer. Mg(2+) is required as a cofactor.

It localises to the cytoplasm. It carries out the reaction tRNA(Lys) + L-lysine + ATP = L-lysyl-tRNA(Lys) + AMP + diphosphate. In Aeromonas hydrophila subsp. hydrophila (strain ATCC 7966 / DSM 30187 / BCRC 13018 / CCUG 14551 / JCM 1027 / KCTC 2358 / NCIMB 9240 / NCTC 8049), this protein is Lysine--tRNA ligase.